A 370-amino-acid chain; its full sequence is tRNA-specific 2-thiouridylase MnmA (370 aa).

ATP contacts are provided by residues alanine 24–serine 31 and leucine 50. Cysteine 118 functions as the Nucleophile in the catalytic mechanism. Cysteine 118 and cysteine 214 are disulfide-bonded. Glycine 142 contributes to the ATP binding site. The interaction with tRNA stretch occupies residues lysine 164 to glutamine 166. Cysteine 214 functions as the Cysteine persulfide intermediate in the catalytic mechanism.

The protein belongs to the MnmA/TRMU family.

The protein localises to the cytoplasm. It carries out the reaction S-sulfanyl-L-cysteinyl-[protein] + uridine(34) in tRNA + AH2 + ATP = 2-thiouridine(34) in tRNA + L-cysteinyl-[protein] + A + AMP + diphosphate + H(+). Functionally, catalyzes the 2-thiolation of uridine at the wobble position (U34) of tRNA, leading to the formation of s(2)U34. In Ehrlichia ruminantium (strain Gardel), this protein is tRNA-specific 2-thiouridylase MnmA.